The following is a 428-amino-acid chain: Kynureninase (428 aa).

Pyridoxal 5'-phosphate is bound by residues Thr-104, Thr-105, 132–135 (FPSD), Asp-213, His-216, and Tyr-238. Residue Lys-239 is modified to N6-(pyridoxal phosphate)lysine. Pyridoxal 5'-phosphate is bound by residues Trp-267 and Thr-295.

This sequence belongs to the kynureninase family. As to quaternary structure, homodimer. The cofactor is pyridoxal 5'-phosphate.

The enzyme catalyses L-kynurenine + H2O = anthranilate + L-alanine + H(+). It catalyses the reaction 3-hydroxy-L-kynurenine + H2O = 3-hydroxyanthranilate + L-alanine + H(+). The protein operates within amino-acid degradation; L-kynurenine degradation; L-alanine and anthranilate from L-kynurenine: step 1/1. It functions in the pathway cofactor biosynthesis; NAD(+) biosynthesis; quinolinate from L-kynurenine: step 2/3. Catalyzes the cleavage of L-kynurenine (L-Kyn) and L-3-hydroxykynurenine (L-3OHKyn) into anthranilic acid (AA) and 3-hydroxyanthranilic acid (3-OHAA), respectively. The chain is Kynureninase from Bacillus cereus (strain ATCC 10987 / NRS 248).